The following is a 218-amino-acid chain: 3-phospho-D-glycerate guanylyltransferase (218 aa).

This sequence belongs to the CofC family.

It catalyses the reaction (2R)-3-phosphoglycerate + GTP + H(+) = 3-[(R)-glyceryl]-diphospho-5'-guanosine + diphosphate. It participates in cofactor biosynthesis; coenzyme F420 biosynthesis. Its function is as follows. Guanylyltransferase that catalyzes the activation of (2R)-3-phosphoglycerate (3PG) as 3-[(R)-glyceryl]-diphospho-5'-guanosine, via the condensation of 3PG with GTP. It is involved in the biosynthesis of a derivative of the hydride carrier cofactor coenzyme F420, 3PG-F420. The polypeptide is 3-phospho-D-glycerate guanylyltransferase (Phenylobacterium zucineum (strain HLK1)).